A 527-amino-acid polypeptide reads, in one-letter code: UDP-glucuronosyltransferase 2A1 (527 aa).

Residues 1–20 (MLNNLLLFSLQISLIGTTLG) form the signal peptide. The Lumenal segment spans residues 21–491 (GNVLIWPMEG…TWFQYHSLDV (471 aa)). Asparagine 49, leucine 313, and asparagine 347 each carry an N-linked (GlcNAc...) asparagine glycan. A helical membrane pass occupies residues 492–512 (IGFLLVCVTTAIFLVIQCCLF). At 513-527 (SCQKFGKIGKKKKRE) the chain is on the cytoplasmic side.

The protein belongs to the UDP-glycosyltransferase family. Olfactory epithelium, brain and fetal lung. Not present in liver.

The protein resides in the membrane. It localises to the endoplasmic reticulum membrane. It catalyses the reaction glucuronate acceptor + UDP-alpha-D-glucuronate = acceptor beta-D-glucuronoside + UDP + H(+). The catalysed reaction is 16beta,17beta-estriol + UDP-alpha-D-glucuronate = 16beta,17beta-estriol 16-O-(beta-D-glucuronate) + UDP + H(+). The enzyme catalyses 16alpha,17alpha-estriol + UDP-alpha-D-glucuronate = 16alpha,17alpha-estriol 16-O-(beta-D-glucuronate) + UDP + H(+). It carries out the reaction 17alpha-estradiol + UDP-alpha-D-glucuronate = 17alpha-estradiol 17-O-(beta-D-glucuronate) + UDP + H(+). It catalyses the reaction 17alpha-estradiol + UDP-alpha-D-glucuronate = 17alpha-estradiol 3-O-(beta-D-glucuronate) + UDP + H(+). The catalysed reaction is 17beta-estradiol + UDP-alpha-D-glucuronate = 17beta-estradiol 3-O-(beta-D-glucuronate) + UDP + H(+). The enzyme catalyses 17beta-estradiol + UDP-alpha-D-glucuronate = 17beta-estradiol 17-O-(beta-D-glucuronate) + UDP + H(+). It carries out the reaction testosterone + UDP-alpha-D-glucuronate = testosterone 17-O-(beta-D-glucuronate) + UDP + H(+). It catalyses the reaction epitestosterone + UDP-alpha-D-glucuronate = epitestosterone 17-O-(beta-D-glucuronate) + UDP + H(+). The catalysed reaction is lithocholate + UDP-alpha-D-glucuronate = lithocholoyl-3-O-(beta-D-glucuronate) + UDP + H(+). The enzyme catalyses lithocholate + UDP-alpha-D-glucuronate = lithocholoyl-24-O-(beta-D-glucuronate) + UDP. It carries out the reaction deoxycholate + UDP-alpha-D-glucuronate = deoxycholoyl-24-O-(beta-D-glucuronate) + UDP. It catalyses the reaction hyodeoxycholate + UDP-alpha-D-glucuronate = hyodeoxycholoyl-24-O-(beta-D-glucuronate) + UDP. The catalysed reaction is hyocholate + UDP-alpha-D-glucuronate = hyocholoyl-24-O-(beta-D-glucuronate) + UDP. UDP-glucuronosyltransferase (UGT) that catalyzes phase II biotransformation reactions in which lipophilic substrates are conjugated with glucuronic acid to increase the metabolite's water solubility, thereby facilitating excretion into either the urine or bile. Essential for the elimination and detoxification of drugs, xenobiotics and endogenous compounds. Catalyzes the glucuronidation of endogenous steroid hormones such as androgens (testosterone and epitestosterone) and estrogens (estradiol and epiestriol). Contributes to bile acid (BA) detoxification by catalyzing the glucuronidation of BA substrates, which are natural detergents for dietary lipids absorption. Shows a high affinity to aliphatic odorants such as citronellol as well as olfactory tissue specificity, and therefore may be involved in olfaction. Shows a potential role in detoxification of toxic waste compounds in the amniotic fluid before birth, and air-born chemical after birth. The polypeptide is UDP-glucuronosyltransferase 2A1 (Homo sapiens (Human)).